A 440-amino-acid polypeptide reads, in one-letter code: 3-phosphoshikimate 1-carboxyvinyltransferase (440 aa).

3-phosphoshikimate-binding residues include Lys25, Ser26, and Arg30. Lys25 lines the phosphoenolpyruvate pocket. Phosphoenolpyruvate is bound by residues Gly96 and Arg124. The 3-phosphoshikimate site is built by Ser168, Gln169, Asp310, and Lys337. Residue Gln169 participates in phosphoenolpyruvate binding. The active-site Proton acceptor is Asp310. Residues Arg341, Arg382, and Lys409 each contribute to the phosphoenolpyruvate site.

The protein belongs to the EPSP synthase family. As to quaternary structure, monomer.

Its subcellular location is the cytoplasm. The catalysed reaction is 3-phosphoshikimate + phosphoenolpyruvate = 5-O-(1-carboxyvinyl)-3-phosphoshikimate + phosphate. The protein operates within metabolic intermediate biosynthesis; chorismate biosynthesis; chorismate from D-erythrose 4-phosphate and phosphoenolpyruvate: step 6/7. Functionally, catalyzes the transfer of the enolpyruvyl moiety of phosphoenolpyruvate (PEP) to the 5-hydroxyl of shikimate-3-phosphate (S3P) to produce enolpyruvyl shikimate-3-phosphate and inorganic phosphate. This chain is 3-phosphoshikimate 1-carboxyvinyltransferase, found in Chlamydia trachomatis serovar A (strain ATCC VR-571B / DSM 19440 / HAR-13).